The following is a 78-amino-acid chain: Small ribosomal subunit protein bS18 (78 aa).

This sequence belongs to the bacterial ribosomal protein bS18 family. Part of the 30S ribosomal subunit. Forms a tight heterodimer with protein bS6.

In terms of biological role, binds as a heterodimer with protein bS6 to the central domain of the 16S rRNA, where it helps stabilize the platform of the 30S subunit. This chain is Small ribosomal subunit protein bS18, found in Parafrankia sp. (strain EAN1pec).